A 329-amino-acid chain; its full sequence is MKNMHVLLLCGGGGSEHEVSLRSANFLEQQLGLVPGVEVTRVEMFADRWFSADGRECKLGLDKLLSFDSVARPVDYVVPCIHGYPGETGDLQSFLELAGLPYLGCDAEASKICFNKISTKLWLSAIGIPNTPYLFLTEQNDAALTEAKAALAKWGKVFIKAASQGSSVGCYSASNETDLLQGIKDAFGYSEQVLIEKAVKPRELEVAVYQYGDELIATYPGEICVPQDKFYTYEEKYSSASHTATSLKAEGLTQAQADAIHEYALKAFRQLKLTHLSRIDFFLTEEGEILLNEINTFPGMTSISMFPKLLEHHGHSFAHYLEQILRKPA.

One can recognise an ATP-grasp domain in the interval 120–326; sequence KLWLSAIGIP…FAHYLEQILR (207 aa). 150-205 provides a ligand contact to ATP; the sequence is ALAKWGKVFIKAASQGSSVGCYSASNETDLLQGIKDAFGYSEQVLIEKAVKPRELE. Mg(2+) contacts are provided by D280, E293, and N295.

Belongs to the D-alanine--D-alanine ligase family. Mg(2+) is required as a cofactor. The cofactor is Mn(2+).

The protein resides in the cytoplasm. It carries out the reaction 2 D-alanine + ATP = D-alanyl-D-alanine + ADP + phosphate + H(+). It functions in the pathway cell wall biogenesis; peptidoglycan biosynthesis. Functionally, cell wall formation. The sequence is that of D-alanine--D-alanine ligase from Aeromonas salmonicida (strain A449).